The sequence spans 392 residues: MAETFLFTSESVNEGHPDKLCDQISDAVLDACLEQDPESKVACETCTKTNLVMVFGEITTKANVDYEKIVRDTCRNIGFISNDVGLDADNCKVLVNIEQQSPDIAQGVHGHLTKRPEEIGAGDQGHMFGYATDETPELMPLSHVLATKLGARLTEVRKNGTCSWLRPDGKTQVTVEYYNDKGAMVPVRVHTVLISTQHDETVTNDEIAADLKEHVIKPVIPEKYLDEKTIFHLNPSGRFVIGGPHGDAGLTGRKIIIDTYGGWGAHGGGAFSGKDPTKVDRSGAYIVRQAAKSIVASELARRCIVQVSYAIGVPEPLSVFVDTYGTGKIPDKEILKIVKENFDFRPGMISINLDLKRGGNSRFLKTAAYGHFGREDPDFTWEVVKPLKWEKA.

E10 is a Mg(2+) binding site. Residue H16 coordinates ATP. E44 provides a ligand contact to K(+). 2 residues coordinate L-methionine: E57 and Q100. ATP-binding positions include 168–170, 236–239, D247, 253–254, A270, K274, and K278; these read DGK, SGRF, and RK. D247 is a binding site for L-methionine. K278 lines the L-methionine pocket.

This sequence belongs to the AdoMet synthase family. In terms of assembly, homotetramer. Requires Mn(2+) as cofactor. Mg(2+) is required as a cofactor. It depends on Co(2+) as a cofactor. The cofactor is K(+).

The protein localises to the cytoplasm. It carries out the reaction L-methionine + ATP + H2O = S-adenosyl-L-methionine + phosphate + diphosphate. Its pathway is amino-acid biosynthesis; S-adenosyl-L-methionine biosynthesis; S-adenosyl-L-methionine from L-methionine: step 1/1. Functionally, catalyzes the formation of S-adenosylmethionine from methionine and ATP. The reaction comprises two steps that are both catalyzed by the same enzyme: formation of S-adenosylmethionine (AdoMet) and triphosphate, and subsequent hydrolysis of the triphosphate. The chain is S-adenosylmethionine synthase (SAMS) from Phaseolus lunatus (Lima bean).